The primary structure comprises 534 residues: CTP synthase (534 aa).

Residues 1–268 (MSVKYIFVTG…AKIVCKRLGL (268 aa)) are amidoligase domain. Ser14 serves as a coordination point for CTP. Ser14 is a UTP binding site. Position 15-20 (15-20 (GLGKGI)) interacts with ATP. Tyr55 serves as a coordination point for L-glutamine. Asp72 lines the ATP pocket. Mg(2+) is bound by residues Asp72 and Glu142. Residues 149–151 (DIE), 189–194 (KTKPTQ), and Lys225 each bind CTP. Residues 189-194 (KTKPTQ) and Lys225 each bind UTP. Residues 293-534 (TIGLVGKYVE…VRAAYEYKTK (242 aa)) form the Glutamine amidotransferase type-1 domain. Gly355 contributes to the L-glutamine binding site. Cys382 acts as the Nucleophile; for glutamine hydrolysis in catalysis. L-glutamine contacts are provided by residues 383–386 (LGMQ), Glu406, and Arg462. Residues His507 and Glu509 contribute to the active site.

This sequence belongs to the CTP synthase family. As to quaternary structure, homotetramer.

The enzyme catalyses UTP + L-glutamine + ATP + H2O = CTP + L-glutamate + ADP + phosphate + 2 H(+). The catalysed reaction is L-glutamine + H2O = L-glutamate + NH4(+). It carries out the reaction UTP + NH4(+) + ATP = CTP + ADP + phosphate + 2 H(+). The protein operates within pyrimidine metabolism; CTP biosynthesis via de novo pathway; CTP from UDP: step 2/2. Its activity is regulated as follows. Allosterically activated by GTP, when glutamine is the substrate; GTP has no effect on the reaction when ammonia is the substrate. The allosteric effector GTP functions by stabilizing the protein conformation that binds the tetrahedral intermediate(s) formed during glutamine hydrolysis. Inhibited by the product CTP, via allosteric rather than competitive inhibition. In terms of biological role, catalyzes the ATP-dependent amination of UTP to CTP with either L-glutamine or ammonia as the source of nitrogen. Regulates intracellular CTP levels through interactions with the four ribonucleotide triphosphates. In Ruminiclostridium cellulolyticum (strain ATCC 35319 / DSM 5812 / JCM 6584 / H10) (Clostridium cellulolyticum), this protein is CTP synthase.